Here is a 129-residue protein sequence, read N- to C-terminus: Lysozyme C-1/C-2 (129 aa).

The C-type lysozyme domain maps to 1–129; it reads KVFERCELAR…VSSYVEGCTL (129 aa). Cystine bridges form between cysteine 6-cysteine 127, cysteine 30-cysteine 115, cysteine 65-cysteine 81, and cysteine 77-cysteine 95. Catalysis depends on residues glutamate 35 and aspartate 53.

This sequence belongs to the glycosyl hydrolase 22 family. In terms of assembly, monomer.

It catalyses the reaction Hydrolysis of (1-&gt;4)-beta-linkages between N-acetylmuramic acid and N-acetyl-D-glucosamine residues in a peptidoglycan and between N-acetyl-D-glucosamine residues in chitodextrins.. Lysozymes have primarily a bacteriolytic function; those in tissues and body fluids are associated with the monocyte-macrophage system and enhance the activity of immunoagents. This Axis axis (Axis deer) protein is Lysozyme C-1/C-2.